A 495-amino-acid chain; its full sequence is MVFSVSIFASLAPYLISAFLLFLLVEQLSYLFKKRNIPGPFFVPPIIGNAVALVRDPTSFWDKQSSTANISGLSANYLIGKFIVYIRDTELSHQIFSNVRPDAFHLIGHPFGKKLFGDHNLIYMFGEDHKSVRRQLAPNFTPKALSTYSALQQLVILRHLRQWEGSTSGGSRPVSLRQLVRELNLETSQTVFVGPYLDKEAKNRFRTDYNLFNLGSMALPIDLPGFAFGEARRAVKRLGETLGICAGKSKARMAAGEEPACLIDFWMQAIVAENPQPPHSGDEEIGGLLFDFLFAAQDASTSSLLWAVTLLDSEPEVLNRVREEVAKIWSPESNALITVDQLAEMKYTRSVAREVIRYRPPATMVPHVAAIDFPLTETYTIPKGTIVFPSVFDSSFQGFTEPDRFDPDRFSETRQEDQVFKRNFLAFGWGPHQCVGQRYALNHLVLFIAMFSSLLDFKRLRSDGCDEIVYCPTISPKDGCTVFLSRRVAKYPNFS.

Residues 5-25 (VSIFASLAPYLISAFLLFLLV) traverse the membrane as a helical segment. Residue C434 participates in heme binding.

The protein belongs to the cytochrome P450 family. The cofactor is heme. Expressed in the vascular tissues of roots, shoots and leaves. Expressed in root tips and sepals. Very low expression in stems and siliques.

The protein localises to the membrane. It carries out the reaction 5-dehydroepisterol + NADPH + O2 + H(+) = ergosta-5,7,22,24(28)-tetraen-3beta-ol + NADP(+) + 2 H2O. It participates in steroid biosynthesis; sterol biosynthesis. Required to form the C-22 double bond in the sterol side chain. Possesses in vitro C-22 desaturase activity toward beta-sitosterol and produces stigmasterol. No activity with campesterol. The sequence is that of Cytochrome P450 710A1 from Arabidopsis thaliana (Mouse-ear cress).